Consider the following 227-residue polypeptide: Cytochrome c oxidase subunit 2 (227 aa).

At 1 to 14 (MAYPMQLGFQDATS) the chain is on the mitochondrial intermembrane side. Residues 15–45 (PIMEELLHFHDHTLMIVFLISSLVLYIISLM) traverse the membrane as a helical segment. At 46–59 (LTTKLTHTSTMDAQ) the chain is on the mitochondrial matrix side. The chain crosses the membrane as a helical span at residues 60–87 (EVETIWTILPAIILILIALPSLRILYMM). Residues 88–227 (DEINNPSLTV…YFEKWSASML (140 aa)) are Mitochondrial intermembrane-facing. Positions 161, 196, 198, 200, 204, and 207 each coordinate Cu cation. Residue E198 participates in Mg(2+) binding. Phosphotyrosine is present on Y218.

Belongs to the cytochrome c oxidase subunit 2 family. In terms of assembly, component of the cytochrome c oxidase (complex IV, CIV), a multisubunit enzyme composed of 14 subunits. The complex is composed of a catalytic core of 3 subunits MT-CO1, MT-CO2 and MT-CO3, encoded in the mitochondrial DNA, and 11 supernumerary subunits COX4I, COX5A, COX5B, COX6A, COX6B, COX6C, COX7A, COX7B, COX7C, COX8 and NDUFA4, which are encoded in the nuclear genome. The complex exists as a monomer or a dimer and forms supercomplexes (SCs) in the inner mitochondrial membrane with NADH-ubiquinone oxidoreductase (complex I, CI) and ubiquinol-cytochrome c oxidoreductase (cytochrome b-c1 complex, complex III, CIII), resulting in different assemblies (supercomplex SCI(1)III(2)IV(1) and megacomplex MCI(2)III(2)IV(2)). Found in a complex with TMEM177, COA6, COX18, COX20, SCO1 and SCO2. Interacts with TMEM177 in a COX20-dependent manner. Interacts with COX20. Interacts with COX16. Requires Cu cation as cofactor.

Its subcellular location is the mitochondrion inner membrane. The catalysed reaction is 4 Fe(II)-[cytochrome c] + O2 + 8 H(+)(in) = 4 Fe(III)-[cytochrome c] + 2 H2O + 4 H(+)(out). In terms of biological role, component of the cytochrome c oxidase, the last enzyme in the mitochondrial electron transport chain which drives oxidative phosphorylation. The respiratory chain contains 3 multisubunit complexes succinate dehydrogenase (complex II, CII), ubiquinol-cytochrome c oxidoreductase (cytochrome b-c1 complex, complex III, CIII) and cytochrome c oxidase (complex IV, CIV), that cooperate to transfer electrons derived from NADH and succinate to molecular oxygen, creating an electrochemical gradient over the inner membrane that drives transmembrane transport and the ATP synthase. Cytochrome c oxidase is the component of the respiratory chain that catalyzes the reduction of oxygen to water. Electrons originating from reduced cytochrome c in the intermembrane space (IMS) are transferred via the dinuclear copper A center (CU(A)) of subunit 2 and heme A of subunit 1 to the active site in subunit 1, a binuclear center (BNC) formed by heme A3 and copper B (CU(B)). The BNC reduces molecular oxygen to 2 water molecules using 4 electrons from cytochrome c in the IMS and 4 protons from the mitochondrial matrix. The protein is Cytochrome c oxidase subunit 2 (MT-CO2) of Boselaphus tragocamelus (Nilgai).